The primary structure comprises 464 residues: Soluble pyridine nucleotide transhydrogenase (464 aa).

35–44 (DNRPLVGGNC) contributes to the FAD binding site.

It belongs to the class-I pyridine nucleotide-disulfide oxidoreductase family. The cofactor is FAD.

Its subcellular location is the cytoplasm. It catalyses the reaction NAD(+) + NADPH = NADH + NADP(+). Conversion of NADPH, generated by peripheral catabolic pathways, to NADH, which can enter the respiratory chain for energy generation. The protein is Soluble pyridine nucleotide transhydrogenase of Ectopseudomonas mendocina (strain ymp) (Pseudomonas mendocina).